A 216-amino-acid chain; its full sequence is 3-keto-L-gulonate-6-phosphate decarboxylase UlaD (216 aa).

Position 11 (Asp-11) interacts with substrate. Residues Glu-33 and Asp-62 each coordinate Mg(2+). Residue Arg-192 participates in substrate binding.

The protein belongs to the HPS/KGPDC family. KGPDC subfamily. Homodimer. Mg(2+) is required as a cofactor.

It carries out the reaction 3-dehydro-L-gulonate 6-phosphate + H(+) = L-xylulose 5-phosphate + CO2. It functions in the pathway cofactor degradation; L-ascorbate degradation; D-xylulose 5-phosphate from L-ascorbate: step 2/4. Functionally, catalyzes the decarboxylation of 3-keto-L-gulonate-6-P into L-xylulose-5-P. Is involved in the anaerobic L-ascorbate utilization. The chain is 3-keto-L-gulonate-6-phosphate decarboxylase UlaD from Shigella dysenteriae serotype 1 (strain Sd197).